The following is a 190-amino-acid chain: Double zinc ribbon protein MJ0416 (190 aa).

Residues 134–183 (CPNCNNYISDSWKYCAHCGAKLKEEEEEVLRCPNCKRPVQPEWIVCPYCG) form a DZANK-type zinc finger.

The sequence is that of Double zinc ribbon protein MJ0416 from Methanocaldococcus jannaschii (strain ATCC 43067 / DSM 2661 / JAL-1 / JCM 10045 / NBRC 100440) (Methanococcus jannaschii).